The sequence spans 318 residues: DNA repair nuclease/redox regulator APEX1 (318 aa).

Residues 1–59 (MPKRGKKGAVVEDAEEPKTEPEAKKSKAGAKKNEKEAVGEGAVLYEDPPDQKTSPSGKS) are disordered. The necessary for interaction with YBX1, binding to RNA, association together with NPM1 to rRNA, endoribonuclease activity on abasic RNA and localization in the nucleoli stretch occupies residues 2–33 (PKRGKKGAVVEDAEEPKTEPEAKKSKAGAKKN). An N6-acetyllysine; by EP300 mark is found at K6 and K7. The Nuclear localization signal (NLS) signature appears at 8–13 (GAVVED). Residues 16 to 38 (EPKTEPEAKKSKAGAKKNEKEAV) show a composition bias toward basic and acidic residues. The segment at 23–33 (AKKSKAGAKKN) is necessary for interaction with NPM1 and for efficient rRNA binding. N6-acetyllysine occurs at positions 27, 31, 32, and 35. At S54 the chain carries Phosphoserine. The Nuclear export signal (NES) signature appears at 64–80 (ICSWNVDGLRAWIKKKG). C65 is modified (S-nitrosocysteine; alternate). A disulfide bridge links C65 with C93. Residue D70 coordinates Mg(2+). The residue at position 93 (C93) is an S-nitrosocysteine; alternate. E96 contacts Mg(2+). The active site involves Y171. N6-acetyllysine is present on K197. Positions 210 and 212 each coordinate Mg(2+). Catalysis depends on D210, which acts as the Proton donor/acceptor. T233 bears the Phosphothreonine; by CDK5 mark. The mitochondrial targeting sequence (MTS) stretch occupies residues 289–318 (QSVLPALCDSKIRSKALGSDHCPITLYLAL). D308 is a Mg(2+) binding site. C310 carries the S-nitrosocysteine modification.

Belongs to the DNA repair enzymes AP/ExoA family. In terms of assembly, monomer. Homodimer; disulfide-linked. Component of the SET complex, composed of at least APEX1, SET, ANP32A, HMGB2, NME1 and TREX1. Associates with the dimer XRCC5/XRCC6 in a DNA-dependent manner. Interacts with SIRT1; the interaction is increased in the context of genotoxic stress. Interacts with HDAC1, HDAC2 and HDAC3; the interactions are not dependent on the APEX1 acetylation status. Interacts with XRCC1; the interaction is induced by SIRT1 and increased with the APEX1 acetylated form. Interacts with NPM1 (via N-terminal domain); the interaction is RNA-dependent and decreases in hydrogen peroxide-damaged cells. Interacts (via N-terminus) with YBX1 (via C-terminus); the interaction is increased in presence of APEX1 acetylated at Lys-6 and Lys-7. Interacts with HNRNPL; the interaction is DNA-dependent. Interacts (via N-terminus) with KPNA1 and KPNA2. Interacts with TXN; the interaction stimulates the FOS/JUN AP-1 complex DNA-binding activity in a redox-dependent manner. Interacts with GZMA, KRT8, MDM2, POLB, PRDX6, PRPF19, RPLP0, TOMM20 and WDR77. Binds to CDK5. Mg(2+) is required as a cofactor. It depends on Mn(2+) as a cofactor. Phosphorylated. Phosphorylation by kinase PKC or casein kinase CK2 results in enhanced redox activity that stimulates binding of the FOS/JUN AP-1 complex to its cognate binding site. AP-endodeoxyribonuclease activity is not affected by CK2-mediated phosphorylation. Phosphorylation of Thr-233 by CDK5 in response to MPP(+)/MPTP (1-methyl-4-phenylpyridinium) reduces AP-endodeoxyribonuclease activity resulting in accumulation of DNA damage and contributing to neuronal death. Post-translationally, acetylated on Lys-6 and Lys-7. Acetylation is increased by the transcriptional coactivator EP300 acetyltransferase, genotoxic agents like H(2)O(2) and methyl methanesulfonate (MMS). Acetylation increases its binding affinity to the negative calcium response element (nCaRE) DNA promoter. The acetylated form induces a stronger binding of YBX1 to the Y-box sequence in the MDR1 promoter than the unacetylated form. Deacetylated on lysines. Lys-6 and Lys-7 are deacetylated by SIRT1. In terms of processing, cleaved at Lys-31 by granzyme A to create the mitochondrial form; leading in reduction of binding to DNA, AP endodeoxyribonuclease activity, redox activation of transcription factors and to enhanced cell death. Cleaved by granzyme K; leading to intracellular ROS accumulation and enhanced cell death after oxidative stress. Cys-69 and Cys-93 are nitrosylated in response to nitric oxide (NO) and lead to the exposure of the nuclear export signal (NES). Post-translationally, ubiquitinated by MDM2; leading to translocation to the cytoplasm and proteasomal degradation. As to expression, the mitochondrial form is expressed in liver (at protein level). Thymus.

It localises to the nucleus. The protein resides in the nucleolus. The protein localises to the nucleus speckle. It is found in the endoplasmic reticulum. Its subcellular location is the cytoplasm. It localises to the mitochondrion. It catalyses the reaction Exonucleolytic cleavage in the 3'- to 5'-direction to yield nucleoside 5'-phosphates.. With respect to regulation, NPM1 stimulates endodeoxyribonuclease activity on double-stranded DNA with AP sites, but inhibits endoribonuclease activity on single-stranded RNA containing AP sites. In terms of biological role, multifunctional protein that plays a central role in the cellular response to oxidative stress. The two major activities of APEX1 are DNA repair and redox regulation of transcriptional factors. Functions as an apurinic/apyrimidinic (AP) endodeoxyribonuclease in the DNA base excision repair (BER) pathway of DNA lesions induced by oxidative and alkylating agents. Initiates repair of AP sites in DNA by catalyzing hydrolytic incision of the phosphodiester backbone immediately adjacent to the damage, generating a single-strand break with 5'-deoxyribose phosphate and 3'-hydroxyl ends. Also incises at AP sites in the DNA strand of DNA/RNA hybrids, single-stranded DNA regions of R-loop structures, and single-stranded RNA molecules. Has 3'-5' exoribonuclease activity on mismatched deoxyribonucleotides at the 3' termini of nicked or gapped DNA molecules during short-patch BER. Possesses DNA 3' phosphodiesterase activity capable of removing lesions (such as phosphoglycolate) blocking the 3' side of DNA strand breaks. May also play a role in the epigenetic regulation of gene expression by participating in DNA demethylation. Acts as a loading factor for POLB onto non-incised AP sites in DNA and stimulates the 5'-terminal deoxyribose 5'-phosphate (dRp) excision activity of POLB. Plays a role in the protection from granzyme-mediated cellular repair leading to cell death. Also involved in the DNA cleavage step of class switch recombination (CSR). On the other hand, APEX1 also exerts reversible nuclear redox activity to regulate DNA binding affinity and transcriptional activity of transcriptional factors by controlling the redox status of their DNA-binding domain, such as the FOS/JUN AP-1 complex after exposure to IR. Involved in calcium-dependent down-regulation of parathyroid hormone (PTH) expression by binding to negative calcium response elements (nCaREs). Together with HNRNPL or the dimer XRCC5/XRCC6, associates with nCaRE, acting as an activator of transcriptional repression. Stimulates the YBX1-mediated MDR1 promoter activity, when acetylated at Lys-6 and Lys-7, leading to drug resistance. Also acts as an endoribonuclease involved in the control of single-stranded RNA metabolism. Plays a role in regulating MYC mRNA turnover by preferentially cleaving in between UA and CA dinucleotides of the MYC coding region determinant (CRD). In association with NMD1, plays a role in the rRNA quality control process during cell cycle progression. Associates, together with YBX1, on the MDR1 promoter. Together with NPM1, associates with rRNA. Binds DNA and RNA. This is DNA repair nuclease/redox regulator APEX1 (APEX1) from Bos taurus (Bovine).